A 93-amino-acid chain; its full sequence is Guanine nucleotide-binding protein subunit gamma (93 aa).

The disordered stretch occupies residues 1-22 (MPQYASRDVGDPSQIKKNKQSM). Cys-89 is lipidated: S-palmitoyl cysteine. Position 90 is a cysteine methyl ester (Cys-90). A lipid anchor (S-farnesyl cysteine) is attached at Cys-90. A propeptide spans 91-93 (VVM) (removed in mature form).

It belongs to the G protein gamma family. As to quaternary structure, g proteins are composed of 3 units, alpha, beta and gamma.

The protein localises to the membrane. The protein is Guanine nucleotide-binding protein subunit gamma (gng-1) of Neurospora crassa (strain ATCC 24698 / 74-OR23-1A / CBS 708.71 / DSM 1257 / FGSC 987).